The chain runs to 242 residues: DNA repair protein RecO (242 aa).

Belongs to the RecO family. Monomer.

Functionally, involved in DNA repair and RecF pathway recombination. In Shigella sonnei (strain Ss046), this protein is DNA repair protein RecO.